Reading from the N-terminus, the 269-residue chain is Thymidylate synthase (269 aa).

Residue Arg21 coordinates dUMP. Residue His51 coordinates (6R)-5,10-methylene-5,6,7,8-tetrahydrofolate. A dUMP-binding site is contributed by 126-127 (RR). Cys146 functions as the Nucleophile in the catalytic mechanism. DUMP-binding positions include 171–174 (RSGD), Asn182, and 212–214 (HLY). Asp174 serves as a coordination point for (6R)-5,10-methylene-5,6,7,8-tetrahydrofolate. Ala268 provides a ligand contact to (6R)-5,10-methylene-5,6,7,8-tetrahydrofolate.

It belongs to the thymidylate synthase family. Bacterial-type ThyA subfamily. Homodimer.

The protein localises to the cytoplasm. The catalysed reaction is dUMP + (6R)-5,10-methylene-5,6,7,8-tetrahydrofolate = 7,8-dihydrofolate + dTMP. It functions in the pathway pyrimidine metabolism; dTTP biosynthesis. Its function is as follows. Catalyzes the reductive methylation of 2'-deoxyuridine-5'-monophosphate (dUMP) to 2'-deoxythymidine-5'-monophosphate (dTMP) while utilizing 5,10-methylenetetrahydrofolate (mTHF) as the methyl donor and reductant in the reaction, yielding dihydrofolate (DHF) as a by-product. This enzymatic reaction provides an intracellular de novo source of dTMP, an essential precursor for DNA biosynthesis. This Methylocella silvestris (strain DSM 15510 / CIP 108128 / LMG 27833 / NCIMB 13906 / BL2) protein is Thymidylate synthase.